Here is a 170-residue protein sequence, read N- to C-terminus: Tubulin polymerization-promoting protein family member 2 (170 aa).

The tract at residues 127–147 (TGTHKERFDESGKGKGIAGRE) is disordered. Residues 129–139 (THKERFDESGK) show a composition bias toward basic and acidic residues.

This sequence belongs to the TPPP family.

It is found in the cytoplasm. Its subcellular location is the cytosol. The protein localises to the cell projection. It localises to the cilium. The protein resides in the flagellum. Its function is as follows. Probable regulator of microtubule dynamics required for sperm motility. In contrast to other members of the family, has no microtubule bundling activity. The sequence is that of Tubulin polymerization-promoting protein family member 2 (TPPP2) from Macaca fascicularis (Crab-eating macaque).